A 339-amino-acid chain; its full sequence is Ferredoxin--NADP reductase (339 aa).

Aspartate 32, glutamine 40, tyrosine 45, valine 85, phenylalanine 120, aspartate 287, and threonine 327 together coordinate FAD.

It belongs to the ferredoxin--NADP reductase type 2 family. As to quaternary structure, homodimer. The cofactor is FAD.

The enzyme catalyses 2 reduced [2Fe-2S]-[ferredoxin] + NADP(+) + H(+) = 2 oxidized [2Fe-2S]-[ferredoxin] + NADPH. The chain is Ferredoxin--NADP reductase from Wolbachia sp. subsp. Brugia malayi (strain TRS).